The chain runs to 104 residues: Small ribosomal subunit protein uS10 (104 aa).

It belongs to the universal ribosomal protein uS10 family. Part of the 30S ribosomal subunit.

In terms of biological role, involved in the binding of tRNA to the ribosomes. In Dichelobacter nodosus (strain VCS1703A), this protein is Small ribosomal subunit protein uS10.